Here is a 65-residue protein sequence, read N- to C-terminus: Large ribosomal subunit protein bL35 (65 aa).

Belongs to the bacterial ribosomal protein bL35 family.

This chain is Large ribosomal subunit protein bL35, found in Magnetococcus marinus (strain ATCC BAA-1437 / JCM 17883 / MC-1).